The sequence spans 303 residues: Ribonuclease Z (303 aa).

H61, H63, D65, H66, H138, D206, and H265 together coordinate Zn(2+). The Proton acceptor role is filled by D65.

The protein belongs to the RNase Z family. In terms of assembly, homodimer. Requires Zn(2+) as cofactor.

It carries out the reaction Endonucleolytic cleavage of RNA, removing extra 3' nucleotides from tRNA precursor, generating 3' termini of tRNAs. A 3'-hydroxy group is left at the tRNA terminus and a 5'-phosphoryl group is left at the trailer molecule.. Functionally, zinc phosphodiesterase, which displays some tRNA 3'-processing endonuclease activity. Probably involved in tRNA maturation, by removing a 3'-trailer from precursor tRNA. The chain is Ribonuclease Z from Agathobacter rectalis (strain ATCC 33656 / DSM 3377 / JCM 17463 / KCTC 5835 / VPI 0990) (Eubacterium rectale).